We begin with the raw amino-acid sequence, 417 residues long: mRNA export factor ICP27 homolog (417 aa).

Residues 1–28 are compositionally biased toward acidic residues; the sequence is MEDIIEGGISSDDDFDSSDSSSDEEESD. The disordered stretch occupies residues 1-143; sequence MEDIIEGGIS…NGPLRNGPPR (143 aa). The tract at residues 64–120 is interaction with RNA; the sequence is RQRSPITWEHQSPLSRVYRSPSPMRFGKRPRISSNSTSRSCKTSWADRVREAAAQRR. Residues 88–94 carry the Nuclear localization signal motif; that stretch reads RFGKRPR. Residues 96-107 show a composition bias toward low complexity; that stretch reads SSNSTSRSCKTS. The interaction with host ALYREF or mouse ALYREF2 stretch occupies residues 106–120; the sequence is TSWADRVREAAAQRR. Residues 108-117 are compositionally biased toward basic and acidic residues; it reads WADRVREAAA. A Nuclear localization signal motif is present at residues 118–127; it reads QRRPSRPFRK. Over residues 120 to 130 the composition is skewed to basic residues; it reads RPSRPFRKPYS. Low complexity predominate over residues 132-141; that stretch reads PRNGPLRNGP. Residues cysteine 295, histidine 385, cysteine 389, and cysteine 394 each contribute to the Zn(2+) site. The CHC2-type zinc finger occupies 295-394; that stretch reads CLMQTTPQDH…HLNKCPSSTC (100 aa).

This sequence belongs to the HHV-1 ICP27 protein family. In terms of assembly, homodimer. Homodimerization is required for transactivation. Interacts with host ALYREF and with mouse ALYREF2. Associates in a complex with RNA, and host export factors NXF1/TAP and ALYREF or ALYREF2; these interactions allow nuclear export of viral transcripts.

The protein localises to the host cytoplasm. Its subcellular location is the host nucleus. Its function is as follows. Probably acts as a viral splicing factor that regulates viral RNA splicing. Functions as a multifunctional regulator of the expression of viral lytic genes. Early protein that promotes the accumulation and nuclear export of viral intronless RNA transcripts by interacting with mRNAs and cellular export proteins. In Saimiriine herpesvirus 2 (strain 11) (SaHV-2), this protein is mRNA export factor ICP27 homolog (EJRF1).